The sequence spans 318 residues: Protein-methionine-sulfoxide reductase catalytic subunit MsrP (318 aa).

The tat-type signal signal peptide spans 1 to 40 (MNRFTRYDVTPEAIFNQRRQIIKAMGLGAAALSLPNIGFA). Residues asparagine 72, 75–76 (YE), cysteine 130, threonine 165, asparagine 217, arginine 222, and 233–235 (SIK) each bind Mo-molybdopterin.

It belongs to the MsrP family. In terms of assembly, heterodimer of a catalytic subunit (MsrP) and a heme-binding subunit (MsrQ). Requires Mo-molybdopterin as cofactor. In terms of processing, predicted to be exported by the Tat system. The position of the signal peptide cleavage has not been experimentally proven.

The protein localises to the periplasm. The catalysed reaction is L-methionyl-[protein] + a quinone + H2O = L-methionyl-(S)-S-oxide-[protein] + a quinol. It catalyses the reaction L-methionyl-[protein] + a quinone + H2O = L-methionyl-(R)-S-oxide-[protein] + a quinol. Its function is as follows. Part of the MsrPQ system that repairs oxidized periplasmic proteins containing methionine sulfoxide residues (Met-O), using respiratory chain electrons. Thus protects these proteins from oxidative-stress damage caused by reactive species of oxygen and chlorine generated by the host defense mechanisms. MsrPQ is essential for the maintenance of envelope integrity under bleach stress, rescuing a wide series of structurally unrelated periplasmic proteins from methionine oxidation. The catalytic subunit MsrP is non-stereospecific, being able to reduce both (R-) and (S-) diastereoisomers of methionine sulfoxide. This is Protein-methionine-sulfoxide reductase catalytic subunit MsrP from Actinobacillus pleuropneumoniae serotype 5b (strain L20).